We begin with the raw amino-acid sequence, 294 residues long: Protease HtpX homolog 2 (294 aa).

2 helical membrane passes run 15–35 (MLFTMFLLAAVYLFFLAFLSY) and 36–56 (YGTSQIFIILFIGLFMAAQYF). A Zn(2+)-binding site is contributed by His-140. Residue Glu-141 is part of the active site. His-144 contacts Zn(2+). 2 consecutive transmembrane segments (helical) span residues 151–171 (AVLTIASFLSSVAFYIVRYSL) and 185–205 (GGIMLVWLVSIVVWIVSFLLI). Residue Glu-213 coordinates Zn(2+).

This sequence belongs to the peptidase M48B family. Zn(2+) is required as a cofactor.

It localises to the cell membrane. The protein is Protease HtpX homolog 2 of Methanosarcina mazei (strain ATCC BAA-159 / DSM 3647 / Goe1 / Go1 / JCM 11833 / OCM 88) (Methanosarcina frisia).